The sequence spans 512 residues: uncharacterized protein (512 aa).

This is an uncharacterized protein from Methanocaldococcus jannaschii (strain ATCC 43067 / DSM 2661 / JAL-1 / JCM 10045 / NBRC 100440) (Methanococcus jannaschii).